The following is a 520-amino-acid chain: Cysteine--tRNA ligase (520 aa).

Cys-29 is a Zn(2+) binding site. The short motif at 31 to 41 is the 'HIGH' region element; that stretch reads PTVYNYPHLGN. The Zn(2+) site is built by Cys-227, His-252, and Glu-256. The 'KMSKS' region signature appears at 301–305; it reads KMSKS. Lys-304 contributes to the ATP binding site.

It belongs to the class-I aminoacyl-tRNA synthetase family. As to quaternary structure, monomer. The cofactor is Zn(2+).

It localises to the cytoplasm. The enzyme catalyses tRNA(Cys) + L-cysteine + ATP = L-cysteinyl-tRNA(Cys) + AMP + diphosphate. In Treponema pallidum (strain Nichols), this protein is Cysteine--tRNA ligase (cysS).